Consider the following 220-residue polypeptide: Early protein OPG038 (220 aa).

Positions 1 to 17 (MVYKLVLLFCIASLGYS) are cleaved as a signal peptide.

The protein belongs to the orthopoxvirus OPG038 family. Homooligomer. Interacts with host CD80 and CD86 when secreted. Post-translationally, glycosylated by host.

It localises to the host endoplasmic reticulum. The protein resides in the secreted. In terms of biological role, plays a role in immune evasion. When secreted, inhibits T-cell activation by preventing the binding of host CD80 and CD86 to soluble CTLA4 and CD28. In the infected cell, may inhibits host NF kappa B activation. The protein is Early protein OPG038 (OPG038) of Homo sapiens (Human).